Consider the following 470-residue polypeptide: Ribulose bisphosphate carboxylase large chain (470 aa).

Residues Asn-115 and Thr-165 each coordinate substrate. The active-site Proton acceptor is Lys-167. Lys-169 is a substrate binding site. 3 residues coordinate Mg(2+): Lys-193, Asp-195, and Glu-196. Lys-193 carries the post-translational modification N6-carboxylysine. His-286 (proton acceptor) is an active-site residue. Substrate contacts are provided by Arg-287, His-319, and Ser-371.

The protein belongs to the RuBisCO large chain family. Type I subfamily. As to quaternary structure, heterohexadecamer of 8 large chains and 8 small chains. The cofactor is Mg(2+).

Its subcellular location is the carboxysome. It catalyses the reaction 2 (2R)-3-phosphoglycerate + 2 H(+) = D-ribulose 1,5-bisphosphate + CO2 + H2O. The enzyme catalyses D-ribulose 1,5-bisphosphate + O2 = 2-phosphoglycolate + (2R)-3-phosphoglycerate + 2 H(+). Its function is as follows. RuBisCO catalyzes two reactions: the carboxylation of D-ribulose 1,5-bisphosphate, the primary event in carbon dioxide fixation, as well as the oxidative fragmentation of the pentose substrate in the photorespiration process. Both reactions occur simultaneously and in competition at the same active site. This is Ribulose bisphosphate carboxylase large chain from Prochlorococcus marinus (strain SARG / CCMP1375 / SS120).